Here is a 990-residue protein sequence, read N- to C-terminus: Importin beta-like protein kap111 (990 aa).

The protein belongs to the importin beta family.

Its subcellular location is the nucleus. Functions as a component of the nuclear pore complex (NPC). NPC components, collectively referred to as nucleoporins (NUPs), can play the role of both NPC structural components and of docking or interaction partners for transiently associated nuclear transport factors. Active directional transport is assured by both, a Phe-Gly (FG) repeat affinity gradient for these transport factors across the NPC and a transport cofactor concentration gradient across the nuclear envelope. In Schizosaccharomyces pombe (strain 972 / ATCC 24843) (Fission yeast), this protein is Importin beta-like protein kap111 (kap111).